The chain runs to 405 residues: Pentatricopeptide repeat-containing protein At1g11630, mitochondrial (405 aa).

The transit peptide at 1–72 directs the protein to the mitochondrion; the sequence is MAFLFRIRTS…RSTSLSPDYH (72 aa). PPR repeat units follow at residues 74–108, 110–144, 145–180, 181–215, 216–250, 251–285, 286–320, 321–355, and 356–386; these read DRII…QPDP, SESF…EIPR, TVKS…GIEP, DLET…WIKP, TAAS…GVHV, GVAT…RMRP, NSVT…GYKP, DSEC…NWVP, and SFSV…VKEK.

It belongs to the PPR family. P subfamily.

It localises to the mitochondrion. The chain is Pentatricopeptide repeat-containing protein At1g11630, mitochondrial from Arabidopsis thaliana (Mouse-ear cress).